Consider the following 212-residue polypeptide: MSPRQQPRRIARELALLSLSQIKGSSDKLEQVELNNLVIAAIRTLSGEVQESLETAAAEVSRSQERLLASETRATNLKSAQTMVTEALELTQNAINRLAAMVEIPEMVQLSSQYEVREYALEIIQTVYRRQTEIEQELATVMVDWQLNRLPKIDRDILRIAVAEMIFLEVPQKVAINEAVEIAKRYSDEEGYRFINGVLRRVTERLKTEARR.

The protein belongs to the NusB family.

Involved in transcription antitermination. Required for transcription of ribosomal RNA (rRNA) genes. Binds specifically to the boxA antiterminator sequence of the ribosomal RNA (rrn) operons. This chain is Transcription antitermination protein NusB, found in Gloeothece citriformis (strain PCC 7424) (Cyanothece sp. (strain PCC 7424)).